The following is a 290-amino-acid chain: MEIAARDVKSLRDKTGAGMMECKRALQECAGDALCAEKYLKERGLAAIENRRGRATAEGVIVIKARHAEGAACGASAVAMVELVCETDFVAKNAEFIALAERIAQAVLEHAYTEVNQVLRDMVVDLATRVRENMSLTRLALLRAGSAGAGQYLSHYVHPDKKTGVVLSFSSDAPDVFLRSDVRAFAYDCCLHAAAYTPRYVRAEDVPAEYVREQREVFQAHVASLQKPAHVKESIVQGKLEKHLAEICFLKQPFVKDDKLSVEKKMAEVGARAGGALRFTQALIYQLGVQ.

An involved in Mg(2+) ion dislocation from EF-Tu region spans residues 87–90; sequence TDFV.

It belongs to the EF-Ts family.

It localises to the cytoplasm. Its function is as follows. Associates with the EF-Tu.GDP complex and induces the exchange of GDP to GTP. It remains bound to the aminoacyl-tRNA.EF-Tu.GTP complex up to the GTP hydrolysis stage on the ribosome. In Treponema pallidum (strain Nichols), this protein is Elongation factor Ts (tsf).